Here is a 77-residue protein sequence, read N- to C-terminus: Translation initiation factor IF-1, chloroplastic (77 aa).

One can recognise an S1-like domain in the interval 1–71 (MKEQKWIHEG…SRGRIIYRLR (71 aa)).

Belongs to the IF-1 family. Component of the 30S ribosomal translation pre-initiation complex which assembles on the 30S ribosome in the order IF-2 and IF-3, IF-1 and N-formylmethionyl-tRNA(fMet); mRNA recruitment can occur at any time during PIC assembly.

The protein localises to the plastid. Its subcellular location is the chloroplast. Functionally, one of the essential components for the initiation of protein synthesis. Stabilizes the binding of IF-2 and IF-3 on the 30S subunit to which N-formylmethionyl-tRNA(fMet) subsequently binds. Helps modulate mRNA selection, yielding the 30S pre-initiation complex (PIC). Upon addition of the 50S ribosomal subunit IF-1, IF-2 and IF-3 are released leaving the mature 70S translation initiation complex. In Buxus microphylla (Littleleaf boxwood), this protein is Translation initiation factor IF-1, chloroplastic.